The sequence spans 249 residues: Small ribosomal subunit protein uS3y (249 aa).

Positions 21–92 (LNEVLTRELA…SVELYAEKVN (72 aa)) constitute a KH type-2 domain. At Ser-212 the chain carries Phosphoserine.

It belongs to the universal ribosomal protein uS3 family.

The protein is Small ribosomal subunit protein uS3y (RPS3B) of Arabidopsis thaliana (Mouse-ear cress).